A 195-amino-acid polypeptide reads, in one-letter code: Heterogeneous nuclear ribonucleoprotein A/B (195 aa).

Residues 1–23 (EEVADGQAHGEXVYREEHHEGEK) are disordered. Over residues 12 to 23 (XVYREEHHEGEK) the composition is skewed to basic and acidic residues. In terms of domain architecture, RRM spans 32–48 (EETKLFVGALSWETTEK). Asymmetric dimethylarginine is present on residues Arg119 and Arg122. Ser173 bears the Phosphoserine; by CK2 mark.

Post-translationally, extensively phosphorylated on tyrosine residues.

It is found in the cytoplasm. The protein resides in the nucleus. In terms of biological role, may regulate mRNA translation and stability. It binds to poly(A) and poly(U) regions of RNA. This binding is inhibited when the protein is phosphorylated. The sequence is that of Heterogeneous nuclear ribonucleoprotein A/B from Artemia salina (Brine shrimp).